The sequence spans 217 residues: MRQFIISENTMQKTSFRNHQVKRFSSQRSTRRKPENQPTRVILFNKPYDVLPQFTDEAGRKTLKEFIPVQGVYAAGRLDRDSEGLLVLTNNGALQARLTQPGKRTGKIYYVQVEGIPTQDALEALRNGVTLNDGPTLPAGAELVDEPAWLWPRNPPIRERKSIPTSWLKITLYEGRNRQVRRMTAHVGFPTLRLIRYAMGDYSLDNLANGEWREATE.

The segment covering 19–28 (HQVKRFSSQR) has biased composition (polar residues). The tract at residues 19-38 (HQVKRFSSQRSTRRKPENQP) is disordered. Residue aspartate 79 is the Nucleophile of the active site.

It belongs to the pseudouridine synthase RsuA family.

The catalysed reaction is uridine(2457) in 23S rRNA = pseudouridine(2457) in 23S rRNA. Its function is as follows. Responsible for synthesis of pseudouridine from uracil-2457 in 23S ribosomal RNA. This Escherichia coli O157:H7 protein is Ribosomal large subunit pseudouridine synthase E (rluE).